The primary structure comprises 359 residues: tRNA-specific 2-thiouridylase MnmA (359 aa).

Residues 6–13 (AMSGGVDS) and Leu-32 contribute to the ATP site. Cys-97 (nucleophile) is an active-site residue. An intrachain disulfide couples Cys-97 to Cys-195. Gly-121 lines the ATP pocket. Residues 144–146 (KDQ) are interaction with tRNA. The Cysteine persulfide intermediate role is filled by Cys-195.

It belongs to the MnmA/TRMU family.

Its subcellular location is the cytoplasm. The enzyme catalyses S-sulfanyl-L-cysteinyl-[protein] + uridine(34) in tRNA + AH2 + ATP = 2-thiouridine(34) in tRNA + L-cysteinyl-[protein] + A + AMP + diphosphate + H(+). Catalyzes the 2-thiolation of uridine at the wobble position (U34) of tRNA, leading to the formation of s(2)U34. This Tropheryma whipplei (strain TW08/27) (Whipple's bacillus) protein is tRNA-specific 2-thiouridylase MnmA.